A 1043-amino-acid chain; its full sequence is V(D)J recombination-activating protein 1 (1043 aa).

The segment at 1-288 (MAASFPPTLG…LAVDFPEHFV (288 aa)) is interaction with importin alpha-1. The span at 40-54 (KTPEEAQKEKKDSFE) shows a compositional bias: basic and acidic residues. Residues 40-80 (KTPEEAQKEKKDSFEGKPSLEQSPAVLDKADGQKPVPTQPL) are disordered. Residue K234 forms a Glycyl lysine isopeptide (Lys-Gly) (interchain with G-Cter in ubiquitin) linkage. Zn(2+) is bound by residues C269, H273, C293, C296, H298, C308, H310, C313, C316, C328, C331, C358, C363, H375, and H379. The RING-type zinc-finger motif lies at 293 to 332 (CQICEHILADPVETNCKHVFCRVCILRCLKVMGSYCPSCR). Residues 354-383 (LMVKCPAKECNEEVSLEKYNHHISSHKESK) form an RAG1-type zinc finger. Positions 392–459 (GGRPRQHLLS…QADELEAIMQ (68 aa)) form a DNA-binding region, NBD. D603, D711, and E965 together coordinate a divalent metal cation.

The protein belongs to the RAG1 family. Homodimer. Component of the RAG complex composed of core components RAG1 and RAG2, and associated component HMGB1 or HMGB2. Interacts with DCAF1, leading to recruitment of the CUL4A-RBX1-DDB1-DCAF1/VPRBP complex to ubiquitinate proteins and limit error-prone repair during V(D)J recombination. Mg(2+) is required as a cofactor. Mn(2+) serves as cofactor. In terms of processing, autoubiquitinated in the presence of CDC34/UBCH3. In terms of tissue distribution, maturing lymphoid cells.

The protein resides in the nucleus. It carries out the reaction S-ubiquitinyl-[E2 ubiquitin-conjugating enzyme]-L-cysteine + [acceptor protein]-L-lysine = [E2 ubiquitin-conjugating enzyme]-L-cysteine + N(6)-ubiquitinyl-[acceptor protein]-L-lysine.. Catalytic component of the RAG complex, a multiprotein complex that mediates the DNA cleavage phase during V(D)J recombination. V(D)J recombination assembles a diverse repertoire of immunoglobulin and T-cell receptor genes in developing B and T-lymphocytes through rearrangement of different V (variable), in some cases D (diversity), and J (joining) gene segments. In the RAG complex, RAG1 mediates the DNA-binding to the conserved recombination signal sequences (RSS) and catalyzes the DNA cleavage activities by introducing a double-strand break between the RSS and the adjacent coding segment. RAG2 is not a catalytic component but is required for all known catalytic activities. DNA cleavage occurs in 2 steps: a first nick is introduced in the top strand immediately upstream of the heptamer, generating a 3'-hydroxyl group that can attack the phosphodiester bond on the opposite strand in a direct transesterification reaction, thereby creating 4 DNA ends: 2 hairpin coding ends and 2 blunt, 5'-phosphorylated ends. The chromatin structure plays an essential role in the V(D)J recombination reactions and the presence of histone H3 trimethylated at 'Lys-4' (H3K4me3) stimulates both the nicking and haipinning steps. The RAG complex also plays a role in pre-B cell allelic exclusion, a process leading to expression of a single immunoglobulin heavy chain allele to enforce clonality and monospecific recognition by the B-cell antigen receptor (BCR) expressed on individual B-lymphocytes. The introduction of DNA breaks by the RAG complex on one immunoglobulin allele induces ATM-dependent repositioning of the other allele to pericentromeric heterochromatin, preventing accessibility to the RAG complex and recombination of the second allele. In addition to its endonuclease activity, RAG1 also acts as an E3 ubiquitin-protein ligase that mediates monoubiquitination of histone H3. Histone H3 monoubiquitination is required for the joining step of V(D)J recombination. Mediates polyubiquitination of KPNA1. The protein is V(D)J recombination-activating protein 1 (RAG1) of Homo sapiens (Human).